Here is a 319-residue protein sequence, read N- to C-terminus: Acetyl esterase (319 aa).

The Involved in the stabilization of the negatively charged intermediate by the formation of the oxyanion hole motif lies at 91–93 (HGG). Residues Ser165, Asp262, and His292 contribute to the active site.

Belongs to the 'GDXG' lipolytic enzyme family. As to quaternary structure, homodimer. Interacts with MalT and MelA.

The protein resides in the cytoplasm. Displays esterase activity towards short chain fatty esters (acyl chain length of up to 8 carbons). Able to hydrolyze triacetylglycerol (triacetin) and tributyrylglycerol (tributyrin), but not trioleylglycerol (triolein) or cholesterol oleate. Negatively regulates MalT activity by antagonizing maltotriose binding. Inhibits MelA galactosidase activity. The chain is Acetyl esterase from Escherichia coli (strain ATCC 8739 / DSM 1576 / NBRC 3972 / NCIMB 8545 / WDCM 00012 / Crooks).